We begin with the raw amino-acid sequence, 291 residues long: MTETLPPVTESAVALQAEVTQRELFEFVLNDPLLASSLYINIALAGLSILLFVFMTRGLDDPRAKLIAVSTILVPVVSIASYTGLASGLTISVLEMPAGHFAEGSSVMLGGEEVDGVVTMWGRYLTWALSTPMILLALGLLAGSNATKLFTAITFDIAMCVTGLAAALTTSSHLMRWFWYAISCACFLVVLYILLVEWAQDAKAAGTADMFNTLKLLTVVMWLGYPIVWALGVEGIAVLPVGVTSWGYSFLDIVAKYIFAFLLLNYLTSNESVVSGSILDVPSASGTPADD.

Over 1 to 30 (MTETLPPVTESAVALQAEVTQRELFEFVLN) the chain is Extracellular. Residues 31-56 (DPLLASSLYINIALAGLSILLFVFMT) traverse the membrane as a helical segment. The Cytoplasmic portion of the chain corresponds to 57 to 62 (RGLDDP). Residues 63–86 (RAKLIAVSTILVPVVSIASYTGLA) form a helical membrane-spanning segment. Over 87–120 (SGLTISVLEMPAGHFAEGSSVMLGGEEVDGVVTM) the chain is Extracellular. The helical transmembrane segment at 121 to 142 (WGRYLTWALSTPMILLALGLLA) threads the bilayer. Residues 143 to 145 (GSN) lie on the Cytoplasmic side of the membrane. Residues 146 to 169 (ATKLFTAITFDIAMCVTGLAAALT) traverse the membrane as a helical segment. The Extracellular segment spans residues 170–172 (TSS). A helical membrane pass occupies residues 173 to 195 (HLMRWFWYAISCACFLVVLYILL). Topologically, residues 196 to 207 (VEWAQDAKAAGT) are cytoplasmic. Residues 208–231 (ADMFNTLKLLTVVMWLGYPIVWAL) form a helical membrane-spanning segment. Residues 232–240 (GVEGIAVLP) are Extracellular-facing. Residues 241-269 (VGVTSWGYSFLDIVAKYIFAFLLLNYLTS) form a helical membrane-spanning segment. An N6-(retinylidene)lysine modification is found at K256. At 270 to 291 (NESVVSGSILDVPSASGTPADD) the chain is on the cytoplasmic side.

Belongs to the archaeal/bacterial/fungal opsin family.

The protein resides in the cell membrane. Light-driven anion pump. Binding affinity for the anions is in the order, bromide &gt; chloride &gt; nitrate &gt; azide &gt; bromate and binding is pH dependent. This is Halorhodopsin (hop) from Natronomonas pharaonis (Natronobacterium pharaonis).